A 284-amino-acid polypeptide reads, in one-letter code: uncharacterized protein (284 aa).

10 N-linked (GlcNAc...) asparagine; by host glycosylation sites follow: N79, N102, N111, N147, N162, N174, N196, N211, N228, and N234. Residues 239–259 form a helical membrane-spanning segment; that stretch reads AFTYGSWGVAMLLFAAVMVLV.

This sequence belongs to the RL11 family.

The protein localises to the membrane. This is an uncharacterized protein from Human cytomegalovirus (strain AD169) (HHV-5).